We begin with the raw amino-acid sequence, 502 residues long: UDP-glucuronosyltransferase 2C1 (502 aa).

Residues Asn177 and Asn288 are each glycosylated (N-linked (GlcNAc...) asparagine). The helical transmembrane segment at 466–481 (VVVFLLTCVATIIFLA) threads the bilayer.

This sequence belongs to the UDP-glycosyltransferase family.

It is found in the microsome membrane. Its subcellular location is the endoplasmic reticulum membrane. It catalyses the reaction glucuronate acceptor + UDP-alpha-D-glucuronate = acceptor beta-D-glucuronoside + UDP + H(+). In terms of biological role, UDPGT is of major importance in the conjugation and subsequent elimination of potentially toxic xenobiotics and endogenous compounds. The protein is UDP-glucuronosyltransferase 2C1 (UGT2C1) of Oryctolagus cuniculus (Rabbit).